The sequence spans 699 residues: Bifunctional protein GAL10 (699 aa).

A galactowaldenase region spans residues 1-357 (MTAQLQSEST…TTENPFGYQL (357 aa)). Residue 13 to 44 (IVLVTGGAGYIGSHTVVELIENGYDCVVADNL) coordinates NAD(+). Positions 358-699 (RGVEARFSAE…YGSKIVYRFS (342 aa)) are mutarotase. Residue H537 is the For mutarotase activity of the active site. S562 is modified (phosphoserine).

The protein in the N-terminal section; belongs to the NAD(P)-dependent epimerase/dehydratase family. In the C-terminal section; belongs to the aldose epimerase family. Requires NAD(+) as cofactor.

It catalyses the reaction UDP-alpha-D-glucose = UDP-alpha-D-galactose. It carries out the reaction alpha-D-glucose = beta-D-glucose. The protein operates within carbohydrate metabolism; galactose metabolism. Its pathway is carbohydrate metabolism; hexose metabolism. Mutarotase converts alpha-aldose to the beta-anomer. It is active on D-glucose, L-arabinose, D-xylose, D-galactose, maltose and lactose. The polypeptide is Bifunctional protein GAL10 (GAL10) (Saccharomyces cerevisiae (strain ATCC 204508 / S288c) (Baker's yeast)).